The chain runs to 317 residues: N(5)-(carboxyethyl)ornithine synthase (317 aa).

3 residues coordinate pyruvate: arginine 15, lysine 71, and histidine 92. Glycine 172 to serine 177 contributes to the NADP(+) binding site.

Belongs to the AlaDH/PNT family. CEOS subfamily. As to quaternary structure, homotetramer.

It catalyses the reaction N(5)-[1(S)-1-carboxyethyl]-L-ornithine + NADP(+) + H2O = L-ornithine + pyruvate + NADPH + H(+). Functionally, catalyzes the NADPH-dependent reductive condensation between pyruvic acid and the side chain amino group of L-ornithine to form N(5)-(L-1-carboxyethyl)-L-ornithine. To a lesser extent, can also use L-lysine as substrate (yielding N(6)-(L-1-carboxyethyl)-L-lysine), and the D-isomers of the 2 basic amino acids. Can use alpha-keto acids other than pyruvate, e.g. glyoxylate. In Clostridium botulinum (strain Hall / ATCC 3502 / NCTC 13319 / Type A), this protein is N(5)-(carboxyethyl)ornithine synthase (ceo).